Reading from the N-terminus, the 148-residue chain is Deoxyuridine 5'-triphosphate nucleotidohydrolase (148 aa).

Residues 68–70 (RSG), N81, 85–87 (TID), and K95 each bind substrate.

This sequence belongs to the dUTPase family. It depends on Mg(2+) as a cofactor.

It carries out the reaction dUTP + H2O = dUMP + diphosphate + H(+). The protein operates within pyrimidine metabolism; dUMP biosynthesis; dUMP from dCTP (dUTP route): step 2/2. This enzyme is involved in nucleotide metabolism: it produces dUMP, the immediate precursor of thymidine nucleotides and it decreases the intracellular concentration of dUTP so that uracil cannot be incorporated into DNA. In Rickettsia rickettsii (strain Iowa), this protein is Deoxyuridine 5'-triphosphate nucleotidohydrolase.